A 327-amino-acid chain; its full sequence is Ubiquinone biosynthesis protein COQ4, mitochondrial (327 aa).

Zn(2+)-binding residues include His-208, Asp-209, His-212, and Glu-224.

This sequence belongs to the COQ4 family. Component of a multi-subunit COQ enzyme complex, composed of at least COQ3, COQ4, COQ5, COQ6, COQ7 and COQ9. Zn(2+) serves as cofactor.

The protein resides in the mitochondrion inner membrane. The catalysed reaction is a 4-hydroxy-3-methoxy-5-(all-trans-polyprenyl)benzoate + H(+) = a 2-methoxy-6-(all-trans-polyprenyl)phenol + CO2. It participates in cofactor biosynthesis; ubiquinone biosynthesis. Functionally, lyase that catalyzes the C1-decarboxylation of 4-hydroxy-3-methoxy-5-(all-trans-polyprenyl)benzoic acid into 2-methoxy-6-(all-trans-polyprenyl)phenol during ubiquinone biosynthesis. In Lachancea thermotolerans (strain ATCC 56472 / CBS 6340 / NRRL Y-8284) (Yeast), this protein is Ubiquinone biosynthesis protein COQ4, mitochondrial.